Here is a 461-residue protein sequence, read N- to C-terminus: ATP-dependent protease ATPase subunit HslU (461 aa).

ATP-binding positions include Ile18, 60 to 65 (GVGKTE), Asp274, Glu339, and Arg411.

It belongs to the ClpX chaperone family. HslU subfamily. As to quaternary structure, a double ring-shaped homohexamer of HslV is capped on each side by a ring-shaped HslU homohexamer. The assembly of the HslU/HslV complex is dependent on binding of ATP.

Its subcellular location is the cytoplasm. Its function is as follows. ATPase subunit of a proteasome-like degradation complex; this subunit has chaperone activity. The binding of ATP and its subsequent hydrolysis by HslU are essential for unfolding of protein substrates subsequently hydrolyzed by HslV. HslU recognizes the N-terminal part of its protein substrates and unfolds these before they are guided to HslV for hydrolysis. The sequence is that of ATP-dependent protease ATPase subunit HslU from Carboxydothermus hydrogenoformans (strain ATCC BAA-161 / DSM 6008 / Z-2901).